The following is a 623-amino-acid chain: UvrABC system protein C (623 aa).

Residues 28–105 (GAPGVYRMLD…IKQLKPKYNV (78 aa)) form the GIY-YIG domain. Positions 215-250 (TRVQEELAEQMMAASEAMEFERAAALRDRIRALTTV) constitute a UVR domain.

It belongs to the UvrC family. In terms of assembly, interacts with UvrB in an incision complex.

The protein resides in the cytoplasm. Functionally, the UvrABC repair system catalyzes the recognition and processing of DNA lesions. UvrC both incises the 5' and 3' sides of the lesion. The N-terminal half is responsible for the 3' incision and the C-terminal half is responsible for the 5' incision. The protein is UvrABC system protein C of Ruegeria pomeroyi (strain ATCC 700808 / DSM 15171 / DSS-3) (Silicibacter pomeroyi).